A 326-amino-acid polypeptide reads, in one-letter code: G-protein coupled receptor 171 (326 aa).

Over 1–19 (MTNSSMFCPIYRDLEPFTY) the chain is Extracellular. Residues 20-40 (FFYLVYLIGIIGSCFATWAFI) traverse the membrane as a helical segment. Topologically, residues 41 to 48 (QKSTNHRC) are cytoplasmic. The helical transmembrane segment at 49–69 (VSIYLINLLTADFLLTLALPV) threads the bilayer. At 70–89 (KIVVDLGVAPWKLRIFHCQV) the chain is on the extracellular side. Cysteine 87 and cysteine 165 form a disulfide bridge. The chain crosses the membrane as a helical span at residues 90–110 (TACLIYINMYLSIIFLAFVSI). Over 111 to 133 (DRCLQLVHSCKIYRIQEPGFAKM) the chain is Cytoplasmic. The chain crosses the membrane as a helical span at residues 134–154 (ISAVVWLMVLLIMVPNMVIPI). At 155 to 182 (KNIKEKSNVGCMEFKREFGKNWHLLTNF) the chain is on the extracellular side. The chain crosses the membrane as a helical span at residues 183 to 203 (ICVAIFLNFSAIILISNFLVI). Over 204–221 (RQLYRNRDNANYPSVKSA) the chain is Cytoplasmic. The chain crosses the membrane as a helical span at residues 222 to 242 (LLNILLVTASYIICFVPYHAV). At 243–268 (RIPYTLSQTEVISDCSTRIALFKAKE) the chain is on the extracellular side. Residues 269–289 (ATLLLAVSNLCFDPILYYHLS) traverse the membrane as a helical segment. Topologically, residues 290–326 (KAFRLKVTETFASPQKMKAREEKPRRENDVQSTGSAC) are cytoplasmic. The tract at residues 305–326 (KMKAREEKPRRENDVQSTGSAC) is disordered. The segment covering 307 to 318 (KAREEKPRREND) has biased composition (basic and acidic residues).

This sequence belongs to the G-protein coupled receptor 1 family.

The protein resides in the cell membrane. In terms of biological role, G-protein coupled receptor for Big LEN, a 16-amino acid neuropeptide produced from the precursor protein, proSAAS (encoded by PCSK1N). Acts through a G(i)-alpha-mediated pathway in response to Big LEN. Big LEN-GPR171 system plays an important role in regulating feeding and metabolism. Also plays a role in modulating fear and anxiety-like behaviors in the basolateral amygdala. Big LEN-GPR171 modulates the mu-type opioid receptor signaling and antinociception. Acts as a negative regulator T cell function. The protein is G-protein coupled receptor 171 of Rattus norvegicus (Rat).